The primary structure comprises 359 residues: Prostaglandin D2 receptor (359 aa).

At 1–21 (MKSPFYRCQNTTSVEKGNSAV) the chain is on the extracellular side. Asparagine 10 is a glycosylation site (N-linked (GlcNAc...) asparagine). The helical transmembrane segment at 22-42 (MGGVLFSTGLLGNLLALGLLA) threads the bilayer. At 43 to 59 (RSGLGWCSRRPLRPLPS) the chain is on the cytoplasmic side. The helical transmembrane segment at 60–80 (VFYMLVCGLTVTDLLGKCLLS) threads the bilayer. The Extracellular segment spans residues 81–107 (PVVLAAYAQNRSLRVLAPALDNSLCQA). N-linked (GlcNAc...) asparagine glycosylation is present at asparagine 90. Cysteines 105 and 183 form a disulfide. A helical membrane pass occupies residues 108–128 (FAFFMSFFGLSSTLQLLAMAL). The Cytoplasmic portion of the chain corresponds to 129–150 (ECWLSLGHPFFYRRHITLRLGA). Residues 151–171 (LVAPVVSAFSLAFCALPFMGF) form a helical membrane-spanning segment. Residues 172 to 195 (GKFVQYCPGTWCFIQMVHEEGSLS) are Extracellular-facing. Residues 196-216 (VLGYSVLYSSLMALLVLATVL) traverse the membrane as a helical segment. Over 217–262 (CNLGAMRNLYAMHRRLQRHPRSCTRDCAEPRADGREASPQPLEELD) the chain is Cytoplasmic. A helical transmembrane segment spans residues 263 to 283 (HLLLLALMTVLFTMCSLPVIY). Residues 284 to 310 (RAYYGAFKDVKEKNRTSEEAEDLRALR) lie on the Extracellular side of the membrane. A glycan (N-linked (GlcNAc...) asparagine) is linked at asparagine 297. The chain crosses the membrane as a helical span at residues 311-331 (FLSVISIVDPWIFIIFRSPVF). Residues 332 to 359 (RIFFHKIFIRPLRYRSRCSNSTNMESSL) lie on the Cytoplasmic side of the membrane.

Belongs to the G-protein coupled receptor 1 family. In terms of tissue distribution, expressed in retinal choroid, ciliary epithelium, longitudinal and circular ciliary muscles, iris, small intestine and platelet membranes.

The protein localises to the cell membrane. Receptor for prostaglandin D2 (PGD2). The activity of this receptor is mainly mediated by G(s) proteins that stimulate adenylate cyclase, resulting in an elevation of intracellular cAMP. A mobilization of calcium is also observed, but without formation of inositol 1,4,5-trisphosphate. Involved in PLA2G3-dependent maturation of mast cells. PLA2G3 is secreted by immature mast cells and acts on nearby fibroblasts upstream to PTDGS to synthesize PGD2, which in turn promotes mast cell maturation and degranulation via PTGDR. In Homo sapiens (Human), this protein is Prostaglandin D2 receptor (PTGDR).